Here is a 283-residue protein sequence, read N- to C-terminus: uncharacterized protein (283 aa).

An HTH rpiR-type domain is found at 3–79 (TGGLAIIQSM…MRVAGDLAKP (77 aa)). The segment at residues 39–58 (VNEISALANSSDAAVIRLCK) is a DNA-binding region (H-T-H motif). One can recognise an SIS domain in the interval 123 to 264 (AVSLLLKAHT…FLGMAAEQYE (142 aa)).

This is an uncharacterized protein from Bacillus subtilis (strain 168).